Reading from the N-terminus, the 526-residue chain is Maturase K (526 aa).

It belongs to the intron maturase 2 family. MatK subfamily.

The protein resides in the plastid. It localises to the chloroplast. In terms of biological role, usually encoded in the trnK tRNA gene intron. Probably assists in splicing its own and other chloroplast group II introns. This chain is Maturase K, found in Iris setosa (Hiougi-ayame).